Consider the following 1213-residue polypeptide: Hybrid signal transduction histidine kinase K (1213 aa).

Disordered stretches follow at residues 1–37 (MIELNNHSKINKNENNTNTRNNSSNNNNNNNNINKTN), 98–189 (NNNY…SSSS), 279–392 (NKNV…IPFR), and 495–565 (TTEQ…NYNN). Composition is skewed to low complexity over residues 98–162 (NNNY…QKDQ), 171–189 (SLSSSSSSSSLSSSSSSSS), 279–331 (NKNV…NSGA), 339–371 (NNNNNNNNNNNNNNNNNNNSNSNSNNNSKSNNN), 498–511 (QQQQLQQQQQQQQQ), and 522–565 (QRQQ…NYNN). The next 6 helical transmembrane spans lie at 600–618 (IIFNSFNFICSIVLDGSNI), 628–648 (LIIGFCFTILSFIPSWIIFFW), 652–672 (INKPAVMAIIAMPMSISSLVI), 676–696 (TGSIHYPCHILCFTLCFALTI), 729–749 (IQWSLMVLSIYLLFFVANLYG), and 768–788 (IIDVTIIIMTLIFTLCYQYFI). One can recognise a Histidine kinase domain in the interval 822–1052 (TMSHEIRTPL…TFWFILPLEE (231 aa)). His-825 carries the post-translational modification Phosphohistidine; by autocatalysis. In terms of domain architecture, Response regulatory spans 1076-1199 (KVLIAEDNII…QLRSAIEMAI (124 aa)). Asp-1125 bears the 4-aspartylphosphate mark.

Activation probably requires transfer of a phosphate group between a histidine in the kinase core (transmitter) domain and an aspartate of the receiver domain.

It localises to the nucleus membrane. The catalysed reaction is ATP + protein L-histidine = ADP + protein N-phospho-L-histidine.. Its function is as follows. Involved in a signal transduction pathway that regulates morphogenesis and controls entry into the culmination stage. May act via the regA pathway, being activated by a morphogenesis-stimulated ligand, reducing phosphodiesterase regA levels and allowing cAMP level to rise to promote the culmination stage. This protein probably undergoes an ATP-dependent autophosphorylation at a conserved histidine residue in the kinase core, and a phosphoryl group is then transferred to a conserved aspartate residue in the receiver domain. The polypeptide is Hybrid signal transduction histidine kinase K (dhkK) (Dictyostelium discoideum (Social amoeba)).